Consider the following 60-residue polypeptide: Large ribosomal subunit protein bL32 (60 aa).

The tract at residues 1–44 (MAVQQNKKSRSARDMRRSHDALSENALSVEKTTGEVHLRHHVSP) is disordered. The segment covering 11-22 (SARDMRRSHDAL) has biased composition (basic and acidic residues).

It belongs to the bacterial ribosomal protein bL32 family.

The sequence is that of Large ribosomal subunit protein bL32 from Pseudomonas putida (strain W619).